A 253-amino-acid chain; its full sequence is 3-deoxy-manno-octulosonate cytidylyltransferase (253 aa).

It belongs to the KdsB family.

It is found in the cytoplasm. It carries out the reaction 3-deoxy-alpha-D-manno-oct-2-ulosonate + CTP = CMP-3-deoxy-beta-D-manno-octulosonate + diphosphate. It participates in nucleotide-sugar biosynthesis; CMP-3-deoxy-D-manno-octulosonate biosynthesis; CMP-3-deoxy-D-manno-octulosonate from 3-deoxy-D-manno-octulosonate and CTP: step 1/1. It functions in the pathway bacterial outer membrane biogenesis; lipopolysaccharide biosynthesis. Its function is as follows. Activates KDO (a required 8-carbon sugar) for incorporation into bacterial lipopolysaccharide in Gram-negative bacteria. The chain is 3-deoxy-manno-octulosonate cytidylyltransferase from Acidithiobacillus ferrooxidans (strain ATCC 23270 / DSM 14882 / CIP 104768 / NCIMB 8455) (Ferrobacillus ferrooxidans (strain ATCC 23270)).